The chain runs to 767 residues: Start control protein cdc10 (767 aa).

The segment at 17–44 (FSYQKRPEDEPSQPLSNRNINKLNDSST) is disordered. Polar residues predominate over residues 29–44 (QPLSNRNINKLNDSST). An HTH APSES-type domain is found at 66–173 (ELYAVECSGM…FNLDLFPKFS (108 aa)). Positions 98 to 119 (ISQILRLAGTSSSENAKELDDI) form a DNA-binding region, H-T-H motif. Residues 189–230 (TSSFNTRSPLRNHNFSNPSKSSKNGVHTINNMQSSPSPSSSF) form a disordered region. The segment covering 192–221 (FNTRSPLRNHNFSNPSKSSKNGVHTINNMQ) has biased composition (polar residues). Serine 252 bears the Phosphoserine mark. The Nuclear localization signal signature appears at 261–264 (KRHR). ANK repeat units follow at residues 356-385 (LGHAALHWAAAVAKMPLLQALIHKGANPLR) and 483-512 (NGDTALNIAARIGNKNIVEVLMQAGASAYI). The interval 542 to 562 (VSLMSENLSSKEKTAVPPRQK) is disordered.

In terms of assembly, DSC1 contains cdc10 and sct1/res1. Interacts with pol5.

The protein resides in the nucleus. Major component of the cell cycle transcription factor complex MBF (MCB binding factor, also known as DSC1), that controls G1-S phase specific gene expression. Involved in the control of rRNA production, via interaction with pol5. May be involved in the transcriptional regulation of the cdc22 and cdt1 genes. In fission yeast, two genes, cdc10 and cdc2, are required for the cell cycle control called start, the point early in the G1 phase at which cells become committed to the mitotic cycle. In Schizosaccharomyces pombe (strain 972 / ATCC 24843) (Fission yeast), this protein is Start control protein cdc10 (cdc10).